The primary structure comprises 153 residues: Aspartate carbamoyltransferase regulatory chain (153 aa).

C109, C114, C138, and C141 together coordinate Zn(2+).

It belongs to the PyrI family. Contains catalytic and regulatory chains. Zn(2+) serves as cofactor.

In terms of biological role, involved in allosteric regulation of aspartate carbamoyltransferase. This Klebsiella pneumoniae subsp. pneumoniae (strain ATCC 700721 / MGH 78578) protein is Aspartate carbamoyltransferase regulatory chain.